A 100-amino-acid chain; its full sequence is Small ribosomal subunit protein uS14 (100 aa).

This sequence belongs to the universal ribosomal protein uS14 family. As to quaternary structure, part of the 30S ribosomal subunit. Contacts proteins S3 and S10.

Functionally, binds 16S rRNA, required for the assembly of 30S particles and may also be responsible for determining the conformation of the 16S rRNA at the A site. The polypeptide is Small ribosomal subunit protein uS14 (Nostoc sp. (strain PCC 7120 / SAG 25.82 / UTEX 2576)).